A 353-amino-acid polypeptide reads, in one-letter code: uncharacterized protein (353 aa).

3 disordered regions span residues 1 to 24 (MSTS…QQSQ), 245 to 280 (NKSS…EKVP), and 305 to 353 (AAGK…DLNN). The span at 9–24 (NKKNNTKQQKYQQQSQ) shows a compositional bias: low complexity. Positions 254–280 (KSGDKSTVKSTDKQVEKKVEESSEKVP) are enriched in basic and acidic residues. Low complexity predominate over residues 321-332 (VTTSTSESTVEV). Over residues 342-353 (EPDEEVFEDLNN) the composition is skewed to acidic residues.

This is an uncharacterized protein from Acanthamoeba polyphaga mimivirus (APMV).